The following is a 78-amino-acid chain: Metallothionein-like protein type 2 (78 aa).

The protein belongs to the metallothionein superfamily. Type 15 family.

In terms of biological role, metallothioneins have a high content of cysteine residues that bind various heavy metals. The chain is Metallothionein-like protein type 2 from Actinidia deliciosa (Kiwi).